The sequence spans 460 residues: Bifunctional protein GlmU (460 aa).

The segment at 1–237 (MSSNQYTAGA…DPDLLGVNTP (237 aa)) is pyrophosphorylase. UDP-N-acetyl-alpha-D-glucosamine is bound by residues 13 to 16 (LAAG), lysine 27, glutamine 78, and 83 to 84 (GT). Residue aspartate 109 coordinates Mg(2+). 4 residues coordinate UDP-N-acetyl-alpha-D-glucosamine: glycine 146, glutamate 160, asparagine 177, and asparagine 235. Asparagine 235 serves as a coordination point for Mg(2+). Positions 238–258 (AELMRSEELLRENIVTRHLHN) are linker. Residues 259–460 (GVHVHAAGSV…QKNLRKTRHS (202 aa)) form an N-acetyltransferase region. UDP-N-acetyl-alpha-D-glucosamine is bound by residues arginine 341 and lysine 359. Histidine 371 (proton acceptor) is an active-site residue. The UDP-N-acetyl-alpha-D-glucosamine site is built by tyrosine 374 and asparagine 385. Residues alanine 388, 394–395 (NY), serine 413, alanine 431, and arginine 448 each bind acetyl-CoA.

This sequence in the N-terminal section; belongs to the N-acetylglucosamine-1-phosphate uridyltransferase family. The protein in the C-terminal section; belongs to the transferase hexapeptide repeat family. As to quaternary structure, homotrimer. Requires Mg(2+) as cofactor.

It is found in the cytoplasm. It carries out the reaction alpha-D-glucosamine 1-phosphate + acetyl-CoA = N-acetyl-alpha-D-glucosamine 1-phosphate + CoA + H(+). It catalyses the reaction N-acetyl-alpha-D-glucosamine 1-phosphate + UTP + H(+) = UDP-N-acetyl-alpha-D-glucosamine + diphosphate. The protein operates within nucleotide-sugar biosynthesis; UDP-N-acetyl-alpha-D-glucosamine biosynthesis; N-acetyl-alpha-D-glucosamine 1-phosphate from alpha-D-glucosamine 6-phosphate (route II): step 2/2. It participates in nucleotide-sugar biosynthesis; UDP-N-acetyl-alpha-D-glucosamine biosynthesis; UDP-N-acetyl-alpha-D-glucosamine from N-acetyl-alpha-D-glucosamine 1-phosphate: step 1/1. It functions in the pathway bacterial outer membrane biogenesis; LPS lipid A biosynthesis. Its function is as follows. Catalyzes the last two sequential reactions in the de novo biosynthetic pathway for UDP-N-acetylglucosamine (UDP-GlcNAc). The C-terminal domain catalyzes the transfer of acetyl group from acetyl coenzyme A to glucosamine-1-phosphate (GlcN-1-P) to produce N-acetylglucosamine-1-phosphate (GlcNAc-1-P), which is converted into UDP-GlcNAc by the transfer of uridine 5-monophosphate (from uridine 5-triphosphate), a reaction catalyzed by the N-terminal domain. The protein is Bifunctional protein GlmU of Oleidesulfovibrio alaskensis (strain ATCC BAA-1058 / DSM 17464 / G20) (Desulfovibrio alaskensis).